Consider the following 445-residue polypeptide: Argininosuccinate synthase (445 aa).

ATP contacts are provided by residues 17 to 25 and Ala-43; that span reads AFSGGLDTS. Residue Tyr-99 coordinates L-citrulline. ATP is bound by residues Gly-129 and Thr-131. L-aspartate is bound by residues Thr-131, Asn-135, and Asp-136. Asn-135 is an L-citrulline binding site. Asp-136 serves as a coordination point for ATP. Residues Arg-139 and Ser-192 each contribute to the L-citrulline site. Asp-194 is an ATP binding site. L-citrulline is bound by residues Thr-201, Glu-203, and Glu-280.

Belongs to the argininosuccinate synthase family. Type 2 subfamily. As to quaternary structure, homotetramer.

The protein localises to the cytoplasm. The enzyme catalyses L-citrulline + L-aspartate + ATP = 2-(N(omega)-L-arginino)succinate + AMP + diphosphate + H(+). Its pathway is amino-acid biosynthesis; L-arginine biosynthesis; L-arginine from L-ornithine and carbamoyl phosphate: step 2/3. This Rhodopseudomonas palustris (strain BisB18) protein is Argininosuccinate synthase.